A 156-amino-acid chain; its full sequence is Oxidized purine nucleoside triphosphate hydrolase (156 aa).

In terms of domain architecture, Nudix hydrolase spans 3–132; the sequence is TSRLYTLVLV…WFPLLLQKKK (130 aa). T8 provides a ligand contact to 2-oxo-dATP. K23 is a binding site for 8-oxo-dGTP. 2-oxo-dATP is bound by residues N33 and 35-38; that span reads FGGK. Residues G36, E52, E55, E56, and E100 each contribute to the Mg(2+) site. Positions 37–58 match the Nudix box motif; sequence GKVQEGETIEDGAKRELREESG. 117-120 is a 2-oxo-dATP binding site; it reads WPDD.

The protein belongs to the Nudix hydrolase family. As to quaternary structure, monomer. It depends on Mg(2+) as a cofactor.

It is found in the cytoplasm. The protein localises to the nucleus. Its subcellular location is the nucleus membrane. The protein resides in the cytoplasmic vesicle. It localises to the secretory vesicle. It is found in the acrosome. It catalyses the reaction 2-oxo-dATP + H2O = 2-oxo-dAMP + diphosphate + H(+). The enzyme catalyses 2-oxo-ATP + H2O = 2-oxo-AMP + diphosphate + H(+). It carries out the reaction 8-oxo-dGTP + H2O = 8-oxo-dGMP + diphosphate + H(+). The catalysed reaction is 8-oxo-dATP + H2O = 8-oxo-dAMP + diphosphate + H(+). It catalyses the reaction O(6)-methyl-dGTP + H2O = O(6)-methyl-dGMP + diphosphate + H(+). The enzyme catalyses N(6)-methyl-dATP + H2O = N(6)-methyl-dAMP + diphosphate + H(+). It carries out the reaction N(6)-methyl-ATP + H2O = N(6)-methyl-AMP + diphosphate + H(+). Its function is as follows. Oxidized purine nucleoside triphosphate hydrolase which is a prominent sanitizer of the oxidized nucleotide pool. Catalyzes the hydrolysis of 2-oxo-dATP (2-hydroxy-dATP) into 2-oxo-dAMP. Also has a significant hydrolase activity toward 2-oxo-ATP, 8-oxo-dGTP and 8-oxo-dATP. Through the hydrolysis of oxidized purine nucleoside triphosphates, prevents their incorporation into DNA and the subsequent transversions A:T to C:G and G:C to T:A. Also catalyzes the hydrolysis of methylated purine nucleoside triphosphate preventing their integration into DNA. Through this antimutagenic activity protects cells from oxidative stress. The polypeptide is Oxidized purine nucleoside triphosphate hydrolase (NUDT1) (Canis lupus familiaris (Dog)).